Consider the following 98-residue polypeptide: Trp operon repressor homolog (98 aa).

The DNA-binding element occupies 59–82 (QRQVSQMLGVGVATITRGSNELKA).

The protein belongs to the TrpR family. In terms of assembly, homodimer.

It localises to the cytoplasm. Functionally, this protein is an aporepressor. When complexed with L-tryptophan it binds the operator region of the trp operon and prevents the initiation of transcription. This Vibrio atlanticus (strain LGP32) (Vibrio splendidus (strain Mel32)) protein is Trp operon repressor homolog.